The sequence spans 216 residues: Large ribosomal subunit protein uL1y (216 aa).

This sequence belongs to the universal ribosomal protein uL1 family. As to quaternary structure, interacts with the GTPase NUG2.

This chain is Large ribosomal subunit protein uL1y (RPL10AB), found in Arabidopsis thaliana (Mouse-ear cress).